Reading from the N-terminus, the 490-residue chain is Cytochrome P450 2C9 (490 aa).

C435 is a binding site for heme.

The protein belongs to the cytochrome P450 family. It depends on heme as a cofactor.

It localises to the endoplasmic reticulum membrane. It is found in the microsome membrane. The catalysed reaction is an organic molecule + reduced [NADPH--hemoprotein reductase] + O2 = an alcohol + oxidized [NADPH--hemoprotein reductase] + H2O + H(+). It catalyses the reaction (5Z,8Z,11Z,14Z)-eicosatetraenoate + reduced [NADPH--hemoprotein reductase] + O2 = (8R,9S)-epoxy-(5Z,11Z,14Z)-eicosatrienoate + oxidized [NADPH--hemoprotein reductase] + H2O + H(+). It carries out the reaction (5Z,8Z,11Z,14Z)-eicosatetraenoate + reduced [NADPH--hemoprotein reductase] + O2 = (8S,9R)-epoxy-(5Z,11Z,14Z)-eicosatrienoate + oxidized [NADPH--hemoprotein reductase] + H2O + H(+). The enzyme catalyses (5Z,8Z,11Z,14Z)-eicosatetraenoate + reduced [NADPH--hemoprotein reductase] + O2 = (11R,12S)-epoxy-(5Z,8Z,14Z)-eicosatrienoate + oxidized [NADPH--hemoprotein reductase] + H2O + H(+). The catalysed reaction is (5Z,8Z,11Z,14Z)-eicosatetraenoate + reduced [NADPH--hemoprotein reductase] + O2 = (11S,12R)-epoxy-(5Z,8Z,14Z)-eicosatrienoate + oxidized [NADPH--hemoprotein reductase] + H2O + H(+). It catalyses the reaction (5Z,8Z,11Z,14Z)-eicosatetraenoate + reduced [NADPH--hemoprotein reductase] + O2 = (14R,15S)-epoxy-(5Z,8Z,11Z)-eicosatrienoate + oxidized [NADPH--hemoprotein reductase] + H2O + H(+). It carries out the reaction (5Z,8Z,11Z,14Z)-eicosatetraenoate + reduced [NADPH--hemoprotein reductase] + O2 = (14S,15R)-epoxy-(5Z,8Z,11Z)-eicosatrienoate + oxidized [NADPH--hemoprotein reductase] + H2O + H(+). The enzyme catalyses (5Z,8Z,11Z,14Z,17Z)-eicosapentaenoate + reduced [NADPH--hemoprotein reductase] + O2 = 8,9-epoxy-(5Z,11Z,14Z,17Z)-eicosatetraenoate + oxidized [NADPH--hemoprotein reductase] + H2O + H(+). The catalysed reaction is (5Z,8Z,11Z,14Z,17Z)-eicosapentaenoate + reduced [NADPH--hemoprotein reductase] + O2 = 11,12-epoxy-(5Z,8Z,14Z,17Z)-eicosatetraenoate + oxidized [NADPH--hemoprotein reductase] + H2O + H(+). It catalyses the reaction (5Z,8Z,11Z,14Z,17Z)-eicosapentaenoate + reduced [NADPH--hemoprotein reductase] + O2 = 14,15-epoxy-(5Z,8Z,11Z,17Z)-eicosatetraenoate + oxidized [NADPH--hemoprotein reductase] + H2O + H(+). It carries out the reaction (5Z,8Z,11Z,14Z,17Z)-eicosapentaenoate + reduced [NADPH--hemoprotein reductase] + O2 = (17R,18S)-epoxy-(5Z,8Z,11Z,14Z)-eicosatetraenoate + oxidized [NADPH--hemoprotein reductase] + H2O + H(+). The enzyme catalyses cholesterol + reduced [NADPH--hemoprotein reductase] + O2 = 25-hydroxycholesterol + oxidized [NADPH--hemoprotein reductase] + H2O + H(+). The catalysed reaction is 17beta-estradiol + reduced [NADPH--hemoprotein reductase] + O2 = 2-hydroxy-17beta-estradiol + oxidized [NADPH--hemoprotein reductase] + H2O + H(+). It catalyses the reaction estrone + reduced [NADPH--hemoprotein reductase] + O2 = 2-hydroxyestrone + oxidized [NADPH--hemoprotein reductase] + H2O + H(+). It carries out the reaction (5Z,8Z,11Z,14Z)-eicosatetraenoate + reduced [NADPH--hemoprotein reductase] + O2 = (11R)-hydroxy-(5Z,8Z,12E,14Z)-eicosatetraenoate + oxidized [NADPH--hemoprotein reductase] + H2O + H(+). The enzyme catalyses (5Z,8Z,11Z,14Z)-eicosatetraenoate + reduced [NADPH--hemoprotein reductase] + O2 = (12R)-hydroxy-(5Z,8Z,10E,14Z)-eicosatetraenoate + oxidized [NADPH--hemoprotein reductase] + H2O + H(+). The catalysed reaction is (5Z,8Z,11Z,14Z)-eicosatetraenoate + reduced [NADPH--hemoprotein reductase] + O2 = (15R)-hydroxy-(5Z,8Z,11Z,13E)-eicosatetraenoate + oxidized [NADPH--hemoprotein reductase] + H2O + H(+). It catalyses the reaction (5Z,8Z,11Z,14Z)-eicosatetraenoate + reduced [NADPH--hemoprotein reductase] + O2 = 10-hydroxy-(5Z,8Z,11Z,14Z)-eicosatetraenoate + oxidized [NADPH--hemoprotein reductase] + H2O + H(+). It carries out the reaction (9Z,12Z)-octadecadienoate + reduced [NADPH--hemoprotein reductase] + O2 = (13R)-hydroxy-(9Z,11E)-octadecadienoate + oxidized [NADPH--hemoprotein reductase] + H2O + H(+). The enzyme catalyses (9Z,12Z)-octadecadienoate + reduced [NADPH--hemoprotein reductase] + O2 = (9R)-hydroxy-(10E,12Z)-octadecadienoate + oxidized [NADPH--hemoprotein reductase] + H2O + H(+). The catalysed reaction is (5Z,8Z,11Z,14Z)-eicosatetraenoate + reduced [NADPH--hemoprotein reductase] + O2 = 19-hydroxy-(5Z,8Z,11Z,14Z)-eicosatetraenoate + oxidized [NADPH--hemoprotein reductase] + H2O + H(+). It catalyses the reaction (5Z,8Z,11Z,14Z)-eicosatetraenoate + reduced [NADPH--hemoprotein reductase] + O2 = 13(S)-hydroxy-(5Z,8Z,11Z,14Z)-eicosatetraenoate + oxidized [NADPH--hemoprotein reductase] + H2O + H(+). It carries out the reaction (5Z,8Z,11Z,14Z)-eicosatetraenoate + reduced [NADPH--hemoprotein reductase] + O2 = 14,15-epoxy-(5Z,8Z,11Z)-eicosatrienoate + oxidized [NADPH--hemoprotein reductase] + H2O + H(+). The enzyme catalyses (5Z,8Z,11Z,14Z)-eicosatetraenoate + reduced [NADPH--hemoprotein reductase] + O2 = 11,12-epoxy-(5Z,8Z,14Z)-eicosatrienoate + oxidized [NADPH--hemoprotein reductase] + H2O + H(+). The catalysed reaction is (5Z,8Z,11Z,14Z)-eicosatetraenoate + reduced [NADPH--hemoprotein reductase] + O2 = 13-hydroxy-(5Z,8Z,11Z,14Z)-eicosatetraenoate + oxidized [NADPH--hemoprotein reductase] + H2O + H(+). It catalyses the reaction (4R)-limonene + reduced [NADPH--hemoprotein reductase] + O2 = (1R,5S)-carveol + oxidized [NADPH--hemoprotein reductase] + H2O + H(+). It carries out the reaction (4S)-limonene + reduced [NADPH--hemoprotein reductase] + O2 = (1S,5R)-carveol + oxidized [NADPH--hemoprotein reductase] + H2O + H(+). The enzyme catalyses (4S)-limonene + reduced [NADPH--hemoprotein reductase] + O2 = (4S)-perillyl alcohol + oxidized [NADPH--hemoprotein reductase] + H2O + H(+). It functions in the pathway lipid metabolism; arachidonate metabolism. The protein operates within steroid metabolism; cholesterol metabolism. It participates in terpene metabolism; (4R)-limonene degradation. In terms of biological role, a cytochrome P450 monooxygenase involved in the metabolism of various endogenous substrates, including fatty acids and steroids. Mechanistically, uses molecular oxygen inserting one oxygen atom into a substrate, and reducing the second into a water molecule, with two electrons provided by NADPH via cytochrome P450 reductase (NADPH--hemoprotein reductase). Catalyzes the epoxidation of double bonds of polyunsaturated fatty acids (PUFA). Catalyzes the hydroxylation of carbon-hydrogen bonds. Metabolizes cholesterol toward 25-hydroxycholesterol, a physiological regulator of cellular cholesterol homeostasis. Exhibits low catalytic activity for the formation of catechol estrogens from 17beta-estradiol (E2) and estrone (E1), namely 2-hydroxy E1 and E2. Catalyzes bisallylic hydroxylation and hydroxylation with double-bond migration of polyunsaturated fatty acids (PUFA). Also metabolizes plant monoterpenes such as limonene. Oxygenates (R)- and (S)-limonene to produce carveol and perillyl alcohol. Contributes to the wide pharmacokinetics variability of the metabolism of drugs such as S-warfarin, diclofenac, phenytoin, tolbutamide and losartan. This chain is Cytochrome P450 2C9, found in Homo sapiens (Human).